Reading from the N-terminus, the 359-residue chain is Histidinol-phosphate aminotransferase (359 aa).

N6-(pyridoxal phosphate)lysine is present on Lys212.

It belongs to the class-II pyridoxal-phosphate-dependent aminotransferase family. Histidinol-phosphate aminotransferase subfamily. In terms of assembly, homodimer. Pyridoxal 5'-phosphate serves as cofactor.

The enzyme catalyses L-histidinol phosphate + 2-oxoglutarate = 3-(imidazol-4-yl)-2-oxopropyl phosphate + L-glutamate. It participates in amino-acid biosynthesis; L-histidine biosynthesis; L-histidine from 5-phospho-alpha-D-ribose 1-diphosphate: step 7/9. In Buchnera aphidicola subsp. Melaphis rhois, this protein is Histidinol-phosphate aminotransferase.